The chain runs to 186 residues: T-cell receptor-associated transmembrane adapter 1 (186 aa).

Topologically, residues 1–7 (MSGISGC) are extracellular. The helical; Signal-anchor for type III membrane protein transmembrane segment at 8–28 (PFFLWGLLALLGLALVISLIF) threads the bilayer. The Cytoplasmic segment spans residues 29–186 (NISHYVEKQR…LIRAKREPIN (158 aa)). At serine 46 the chain carries Phosphoserine. Phosphotyrosine is present on tyrosine 79. Positions 79–82 (YEQM) are interaction with PIK3R1. Residues 116-140 (SVKGKRRKPRKQNTHFSDKDGDEQL) are disordered. Basic residues predominate over residues 118-128 (KGKRRKPRKQN). The segment covering 131-140 (FSDKDGDEQL) has biased composition (basic and acidic residues).

As to quaternary structure, homodimer; disulfide-linked. Interacts with CD3Z. When phosphorylated, interacts with PIK3R1. Post-translationally, phosphorylated on tyrosines by LCK or FYN upon TCR activation. In terms of tissue distribution, strongly expressed in thymus, and to a lesser extent in spleen, lymph node and peripheral blood lymphocytes. Present in T-cells and NK cells, but not B-cells (at protein level).

The protein localises to the cell membrane. In terms of biological role, stabilizes the TCR (T-cell antigen receptor)/CD3 complex at the surface of T-cells. The protein is T-cell receptor-associated transmembrane adapter 1 (TRAT1) of Homo sapiens (Human).